We begin with the raw amino-acid sequence, 456 residues long: Bifunctional protein GlmU (456 aa).

Residues 1-229 (MLNSAMSVVI…ISETDGVNNR (229 aa)) are pyrophosphorylase. Residues 11–14 (LAAG), K25, Q76, 81–82 (GT), 103–105 (YGD), G140, E154, N169, and N227 each bind UDP-N-acetyl-alpha-D-glucosamine. Residue D105 participates in Mg(2+) binding. Mg(2+) is bound at residue N227. The segment at 230-250 (LQLSRLERIYQAEQAEKLLLS) is linker. The interval 251–456 (GVMLRDPARF…QGWQRPVKKK (206 aa)) is N-acetyltransferase. The UDP-N-acetyl-alpha-D-glucosamine site is built by R333 and K351. The Proton acceptor role is filled by H363. Residues Y366 and N377 each coordinate UDP-N-acetyl-alpha-D-glucosamine. Residues A380, 386 to 387 (NY), S405, A423, and R440 contribute to the acetyl-CoA site.

This sequence in the N-terminal section; belongs to the N-acetylglucosamine-1-phosphate uridyltransferase family. In the C-terminal section; belongs to the transferase hexapeptide repeat family. In terms of assembly, homotrimer. Mg(2+) serves as cofactor.

The protein resides in the cytoplasm. The catalysed reaction is alpha-D-glucosamine 1-phosphate + acetyl-CoA = N-acetyl-alpha-D-glucosamine 1-phosphate + CoA + H(+). It catalyses the reaction N-acetyl-alpha-D-glucosamine 1-phosphate + UTP + H(+) = UDP-N-acetyl-alpha-D-glucosamine + diphosphate. It functions in the pathway nucleotide-sugar biosynthesis; UDP-N-acetyl-alpha-D-glucosamine biosynthesis; N-acetyl-alpha-D-glucosamine 1-phosphate from alpha-D-glucosamine 6-phosphate (route II): step 2/2. It participates in nucleotide-sugar biosynthesis; UDP-N-acetyl-alpha-D-glucosamine biosynthesis; UDP-N-acetyl-alpha-D-glucosamine from N-acetyl-alpha-D-glucosamine 1-phosphate: step 1/1. Its pathway is bacterial outer membrane biogenesis; LPS lipid A biosynthesis. Its function is as follows. Catalyzes the last two sequential reactions in the de novo biosynthetic pathway for UDP-N-acetylglucosamine (UDP-GlcNAc). The C-terminal domain catalyzes the transfer of acetyl group from acetyl coenzyme A to glucosamine-1-phosphate (GlcN-1-P) to produce N-acetylglucosamine-1-phosphate (GlcNAc-1-P), which is converted into UDP-GlcNAc by the transfer of uridine 5-monophosphate (from uridine 5-triphosphate), a reaction catalyzed by the N-terminal domain. In Salmonella agona (strain SL483), this protein is Bifunctional protein GlmU.